We begin with the raw amino-acid sequence, 931 residues long: Protocadherin gamma-B2 (931 aa).

A signal peptide spans 1–30; the sequence is MKASSGRCGLVRWLQVLLPFLLSLFPGALP. 6 Cadherin domains span residues 31-133, 134-242, 243-347, 348-452, 453-562, and 570-675; these read VQIR…TPLF, KQTK…PPVF, SQDV…APEV, IVTS…APVF, QQTS…APRV, and DGSA…LPDL. Over 31–691 the chain is Extracellular; it reads VQIRYSIPEE…SDPQAKLQFY (661 aa). 2 N-linked (GlcNAc...) asparagine glycosylation sites follow: Asn-419 and Asn-545. A helical membrane pass occupies residues 692–712; that stretch reads LVVALALISVLFFLAVILAIS. Over 713 to 931 the chain is Cytoplasmic; sequence LRLRLSSRSD…KKKSGKKEKK (219 aa). 2 disordered regions span residues 814–840 and 901–931; these read DWRF…WPNN and ATLT…KEKK. Polar residues predominate over residues 815–840; the sequence is WRFSQAQRPGTSGSQNGDDTGTWPNN. Positions 921–931 are enriched in basic residues; sequence NKKKSGKKEKK.

The protein resides in the cell membrane. In terms of biological role, potential calcium-dependent cell-adhesion protein. May be involved in the establishment and maintenance of specific neuronal connections in the brain. This chain is Protocadherin gamma-B2 (PCDHGB2), found in Homo sapiens (Human).